The following is a 747-amino-acid chain: Oxysterol-binding protein-related protein 11 (747 aa).

Methionine 1 is modified (N-acetylmethionine). Residues 1–50 (MQGGEPVSTMKVSESEGKLEGQATAVTPNKNSSCGGGISSSSSSRGGSAK) form a disordered region. Serine 15 is modified (phosphoserine). Phosphothreonine is present on threonine 27. A PH domain is found at 58-155 (MENVYGYLMK…WVSRLQICTQ (98 aa)). Tyrosine 62 carries the post-translational modification Phosphotyrosine. The disordered stretch occupies residues 158–188 (TEAIGKNNPPLKSRSFSLASSSNSPISQRRP). Residues 170-184 (SRSFSLASSSNSPIS) show a composition bias toward low complexity. Phosphoserine is present on residues serine 172, serine 174, serine 177, serine 181, serine 184, and serine 189. Basic and acidic residues predominate over residues 689–713 (EIDKATEHKHTLEERQRTEERHRTE). The interval 689 to 714 (EIDKATEHKHTLEERQRTEERHRTET) is disordered.

It belongs to the OSBP family. In terms of assembly, heterodimer with OSBPL9. In terms of tissue distribution, present at highest levels in ovary, testis, kidney, liver, stomach, brain, and adipose tissue. Strong expression (at protein level) in epithelial cells of kidney tubules, testicular tubules, caecum, and skin. Present at low levels in subcutaneous and visceral adipose tissue (at protein level).

The protein localises to the late endosome membrane. Its subcellular location is the golgi apparatus. The protein resides in the trans-Golgi network membrane. The enzyme catalyses a 1,2-diacyl-sn-glycero-3-phospho-(1D-myo-inositol 4-phosphate)(out) + a 1,2-diacyl-sn-glycero-3-phospho-L-serine(in) = a 1,2-diacyl-sn-glycero-3-phospho-(1D-myo-inositol 4-phosphate)(in) + a 1,2-diacyl-sn-glycero-3-phospho-L-serine(out). Plays a role in regulating ADIPOQ and FABP4 levels in differentiating adipocytes and is also involved in regulation of adipocyte triglyceride storage. Weakly binds 25-hydroxycholesterol. Interacts with OSBPL9 to function as lipid transfer proteins. Together they form a heterodimer that localizes at the ER-trans-Golgi membrane contact sites, and exchanges phosphatidylserine (1,2-diacyl-sn-glycero-3-phospho-L-serine, PS) for phosphatidylinositol-4-phosphate (1,2-diacyl-sn-glycero-3-phospho-(1D-myo-inositol 4-phosphate), PI(4)P) between the two organelles, a step that is critical for sphingomyelin synthesis in the Golgi complex. The polypeptide is Oxysterol-binding protein-related protein 11 (OSBPL11) (Homo sapiens (Human)).